The sequence spans 185 residues: Large ribosomal subunit protein uL22 (185 aa).

The protein belongs to the universal ribosomal protein uL22 family. Part of the 50S ribosomal subunit.

Its function is as follows. This protein binds specifically to 23S rRNA. It makes multiple contacts with different domains of the 23S rRNA in the assembled 50S subunit and ribosome. Functionally, the globular domain of the protein is located near the polypeptide exit tunnel on the outside of the subunit, while an extended beta-hairpin is found that lines the wall of the exit tunnel in the center of the 70S ribosome. This Pyrobaculum neutrophilum (strain DSM 2338 / JCM 9278 / NBRC 100436 / V24Sta) (Thermoproteus neutrophilus) protein is Large ribosomal subunit protein uL22.